Consider the following 216-residue polypeptide: tRNA (guanine-N(7)-)-methyltransferase (216 aa).

E44, E69, N96, and D118 together coordinate S-adenosyl-L-methionine. The active site involves D118. K122 lines the substrate pocket. The interaction with RNA stretch occupies residues 124-129; it reads RHEKRR. Residues D154 and 191–194 contribute to the substrate site; that span reads TEYE.

This sequence belongs to the class I-like SAM-binding methyltransferase superfamily. TrmB family.

It carries out the reaction guanosine(46) in tRNA + S-adenosyl-L-methionine = N(7)-methylguanosine(46) in tRNA + S-adenosyl-L-homocysteine. The protein operates within tRNA modification; N(7)-methylguanine-tRNA biosynthesis. In terms of biological role, catalyzes the formation of N(7)-methylguanine at position 46 (m7G46) in tRNA. This chain is tRNA (guanine-N(7)-)-methyltransferase, found in Geobacillus thermodenitrificans (strain NG80-2).